Reading from the N-terminus, the 353-residue chain is Photosystem II D2 protein (353 aa).

An N-acetylthreonine modification is found at Thr-2. Thr-2 bears the Phosphothreonine mark. The chain crosses the membrane as a helical span at residues Cys-41–Thr-61. Residue His-118 participates in chlorophyll a binding. The helical transmembrane segment at Gly-125–Pro-141 threads the bilayer. The pheophytin a site is built by Gln-130 and Asn-143. A helical transmembrane segment spans residues Val-153 to Ser-166. His-198 is a binding site for chlorophyll a. The chain crosses the membrane as a helical span at residues Ala-208 to Asp-228. The a plastoquinone site is built by His-215 and Phe-262. His-215 contributes to the Fe cation binding site. Residue His-269 participates in Fe cation binding. A helical membrane pass occupies residues Gly-279–Arg-295.

Belongs to the reaction center PufL/M/PsbA/D family. In terms of assembly, PSII is composed of 1 copy each of membrane proteins PsbA, PsbB, PsbC, PsbD, PsbE, PsbF, PsbH, PsbI, PsbJ, PsbK, PsbL, PsbM, PsbT, PsbX, PsbY, PsbZ, Psb30/Ycf12, at least 3 peripheral proteins of the oxygen-evolving complex and a large number of cofactors. It forms dimeric complexes. Requires The D1/D2 heterodimer binds P680, chlorophylls that are the primary electron donor of PSII, and subsequent electron acceptors. It shares a non-heme iron and each subunit binds pheophytin, quinone, additional chlorophylls, carotenoids and lipids. There is also a Cl(-1) ion associated with D1 and D2, which is required for oxygen evolution. The PSII complex binds additional chlorophylls, carotenoids and specific lipids. as cofactor.

The protein resides in the plastid. It is found in the chloroplast thylakoid membrane. The enzyme catalyses 2 a plastoquinone + 4 hnu + 2 H2O = 2 a plastoquinol + O2. Photosystem II (PSII) is a light-driven water:plastoquinone oxidoreductase that uses light energy to abstract electrons from H(2)O, generating O(2) and a proton gradient subsequently used for ATP formation. It consists of a core antenna complex that captures photons, and an electron transfer chain that converts photonic excitation into a charge separation. The D1/D2 (PsbA/PsbD) reaction center heterodimer binds P680, the primary electron donor of PSII as well as several subsequent electron acceptors. D2 is needed for assembly of a stable PSII complex. In Citrus sinensis (Sweet orange), this protein is Photosystem II D2 protein.